A 256-amino-acid polypeptide reads, in one-letter code: UPF0644 protein PB2B4.06 (256 aa).

A helical membrane pass occupies residues 34–56 (GVVYAGVSGTCAAAGYMFGNFVM).

Belongs to the UPF0644 family.

The protein localises to the mitochondrion membrane. The protein is UPF0644 protein PB2B4.06 of Schizosaccharomyces pombe (strain 972 / ATCC 24843) (Fission yeast).